We begin with the raw amino-acid sequence, 532 residues long: Cocaine esterase (532 aa).

Residue Gln1 is modified to Pyrrolidone carboxylic acid. Cys69 and Cys96 form a disulfide bridge. The active-site Acyl-ester intermediate is Ser201. Asn249 carries an N-linked (GlcNAc...) asparagine glycan. Cys253 and Cys264 are disulfide-bonded. Residues Glu318 and His430 each act as charge relay system in the active site. Residues His529–Leu532 carry the Prevents secretion from ER motif.

The protein belongs to the type-B carboxylesterase/lipase family. In terms of assembly, monomer.

It is found in the endoplasmic reticulum lumen. It catalyses the reaction a carboxylic ester + H2O = an alcohol + a carboxylate + H(+). The enzyme catalyses cocaine + H2O = ecgonine methyl ester + benzoate + H(+). It carries out the reaction 2-(5Z,8Z,11Z,14Z-eicosatetraenoyl)-glycerol + H2O = glycerol + (5Z,8Z,11Z,14Z)-eicosatetraenoate + H(+). The catalysed reaction is prostaglandin E2 1-glyceryl ester + H2O = prostaglandin E2 + glycerol + H(+). It catalyses the reaction prostaglandin F2alpha 1-glyceryl ester + H2O = prostaglandin F2alpha + glycerol + H(+). Involved in the detoxification of xenobiotics and in the activation of ester and amide prodrugs. Converts monoacylglycerides to free fatty acids and glycerol. Hydrolyzes of 2-arachidonoylglycerol and prostaglandins. In Oryctolagus cuniculus (Rabbit), this protein is Cocaine esterase (CES2).